Here is an 822-residue protein sequence, read N- to C-terminus: Microcephalin (822 aa).

Residues 10–99 (AFLKDVVAYV…ALVDESLFPA (90 aa)) enclose the BRCT 1 domain. Disordered stretches follow at residues 182-203 (MKEK…SQQN), 219-243 (PLSS…DQER), and 266-295 (SSFY…ESIN). Composition is skewed to polar residues over residues 189 to 203 (LSPT…SQQN) and 219 to 235 (PLSS…SSFG). Phosphoserine occurs at positions 273, 290, and 327. Position 329 is a phosphothreonine (threonine 329). 3 disordered regions span residues 335–366 (EHQV…LKKR), 498–567 (NDSP…SPED), and 594–636 (TGYS…PTRT). Residues 522-541 (HPDTLSSSAHHITPLKGNST) show a composition bias toward polar residues. 2 stretches are compositionally biased toward basic and acidic residues: residues 542–553 (ETRDPGDGKGSP) and 625–634 (KKSEKEEKPT). BRCT domains are found at residues 627–717 (SEKE…PFEL) and 738–820 (YQGT…NYQL).

Interacts with CDC27 and maybe other components of the APC/C complex. Interacts with histone variant H2AX under DNA damage conditions. In terms of tissue distribution, high levels of expression are found in the developing forebrain and, in particular, in the walls of the lateral ventricles.

The protein localises to the cytoplasm. It localises to the cytoskeleton. It is found in the microtubule organizing center. Its subcellular location is the centrosome. Functionally, implicated in chromosome condensation and DNA damage induced cellular responses. May play a role in neurogenesis and regulation of the size of the cerebral cortex. This is Microcephalin from Mus musculus (Mouse).